A 218-amino-acid polypeptide reads, in one-letter code: Large ribosomal subunit protein uL3 (218 aa).

Residues 132–152 (FKGQGASHGTQAVHRRPGSIG) are disordered.

Belongs to the universal ribosomal protein uL3 family. In terms of assembly, part of the 50S ribosomal subunit. Forms a cluster with proteins L14 and L19.

Its function is as follows. One of the primary rRNA binding proteins, it binds directly near the 3'-end of the 23S rRNA, where it nucleates assembly of the 50S subunit. This is Large ribosomal subunit protein uL3 from Rhodococcus erythropolis (strain PR4 / NBRC 100887).